Here is a 624-residue protein sequence, read N- to C-terminus: Diatom spindle kinesin-1 (624 aa).

The tract at residues 1–59 (MNAANRRKSTSTVGITGRKDATRMKIEQMEKERKERRKTMMQRKEARKQEHMKNIEAGN) is disordered. Residues 1–85 (MNAANRRKST…QENKIGDKSP (85 aa)) form a globular region. Basic and acidic residues-rich tracts occupy residues 17–33 (GRKDATRMKIEQMEKER) and 42–54 (QRKEARKQEHMKN). The 317-residue stretch at 95-411 (NICIAVRKRP…LRYADRIKEQ (317 aa)) folds into the Kinesin motor domain. 186–193 (GQTGSGKT) contributes to the ATP binding site. The stretch at 426–624 (SNREIMPSKE…LARQVQLTQY (199 aa)) forms a coiled coil. Residues 478–511 (VDEEEADDEEGDYEEESEDLDYEDSEGQDYEEAV) show a composition bias toward acidic residues. The disordered stretch occupies residues 478 to 528 (VDEEEADDEEGDYEEESEDLDYEDSEGQDYEEAVESQYDHSQEAQEGEEEL).

Belongs to the TRAFAC class myosin-kinesin ATPase superfamily. Kinesin family. MCAK/KIF2 subfamily.

It is found in the cytoplasm. The protein localises to the cytoskeleton. Its function is as follows. Involved in anaphase spindle elongation. This chain is Diatom spindle kinesin-1 (DSK1), found in Cylindrotheca fusiformis (Marine diatom).